The primary structure comprises 1733 residues: DNA-directed RNA polymerase II subunit RPB1 (1733 aa).

Cysteine 67, cysteine 70, cysteine 77, histidine 80, cysteine 107, cysteine 110, cysteine 148, and cysteine 167 together coordinate Zn(2+). Residues 248-260 (PSISFNESQRGED) are lid loop. Positions 306-323 (NDIAGQPQALQKSGRPVK) are rudder loop. Mg(2+) is bound by residues aspartate 481, aspartate 483, and aspartate 485. A Glycyl lysine isopeptide (Lys-Gly) (interchain with G-Cter in ubiquitin) cross-link involves residue lysine 695. The tract at residues 810–822 (PQEFFFHAMGGRE) is bridging helix. Residues lysine 1246 and lysine 1350 each participate in a glycyl lysine isopeptide (Lys-Gly) (interchain with G-Cter in ubiquitin) cross-link. A Phosphothreonine modification is found at threonine 1471. A disordered region spans residues 1537-1733 (VSSPGFSPTS…QKHNENENSR (197 aa)). Residues 1538–1719 (SSPGFSPTSP…YSPGSPAYSP (182 aa)) show a composition bias toward low complexity. 23 repeat units span residues 1549–1555 (YSPTSPA), 1556–1562 (YSPTSPS), 1563–1569 (YSPTSPS), 1570–1576 (YSPTSPS), 1577–1583 (YSPTSPS), 1584–1590 (YSPTSPS), 1591–1597 (YSPTSPS), 1598–1604 (YSPTSPS), 1605–1611 (YSPTSPS), 1612–1618 (YSPTSPS), 1619–1625 (YSPTSPS), 1626–1632 (YSPTSPS), 1633–1639 (YSPTSPS), 1640–1646 (YSPTSPS), 1647–1653 (YSPTSPS), 1654–1660 (YSPTSPA), 1661–1667 (YSPTSPS), 1668–1674 (YSPTSPS), 1675–1681 (YSPTSPS), 1682–1688 (YSPTSPS), 1689–1695 (YSPTSPN), 1696–1702 (YSPTSPS), and 1703–1709 (YSPTSPG). Positions 1549–1716 (YSPTSPAYSP…SPGYSPGSPA (168 aa)) are C-terminal domain (CTD); 24 X 7 AA approximate tandem repeats of Y-S-P-T-S-P-[A-S-N-G]. The stretch at 1710 to 1716 (YSPGSPA) is one 24; approximate repeat. Residues 1720–1733 (KQDEQKHNENENSR) are compositionally biased toward basic and acidic residues.

The protein belongs to the RNA polymerase beta' chain family. As to quaternary structure, component of the RNA polymerase II (Pol II) complex consisting of 12 subunits. Interacts with DEF1; the interaction is direct and serves to bridge RPB1 to the Elongin complex in a DNA-damaged dependent manner. Interacts with the Elongin subunit ELA1. Interacts with the Elongin subunit ELC1. Interacts with ASK10. Interacts with ESS1. Interacts with RTT103. Interacts with SHE2. Post-translationally, the tandem 7 residues repeats in the C-terminal domain (CTD) can be highly phosphorylated. The phosphorylation activates Pol II. Phosphorylation occurs mainly at residues 'Ser-2' and 'Ser-5' of the heptapeptide repeat. The phosphorylated form of Pol II appears to carry, on average, one phosphate per repeat. The phosphorylation state is believed to result from the balanced action of site-specific CTD kinases and phosphatases, and a 'CTD code' that specifies the position of Pol II within the transcription cycle has been proposed. Phosphorylation at 'Ser-5' occurs in promoter-proximal regions in early elongation. Phosphorylation at 'Ser-2' predominates in regions more distal to the promoter and triggers binding of the 3' RNA processing machinery. CTD kinases include KIN28 (as part of the TFKII complex, a subcomplex of the TFIIH holo complex), SSN3/SRB10 (as part of the SRB8-11 complex, a module of the Mediator complex), CTK1 (as part of CTD kinase), and probably BUR1 (as part of the BUR1-BUR2 kinase complex). Phosphatases include FCP1 and SSU72. Following transcription stress, the elongating form of RNA polymerase II (RNA pol IIo) is polyubiquitinated via 'Lys-63'-linkages on Lys-1246 by the RSP5-UBA1-UBC5 complex at DNA damage sites without leading to degradation: ubiquitination promotes RNA pol IIo backtracking to allow access by the transcription-coupled nucleotide excision repair (TC-NER) machinery. Subsequent DEF1-dependent polyubiquitination by the elongin complex via 'Lys-48'-linkages may lead to proteasome-mediated degradation; presumably at stalled RNA pol II where TC-NER has failed, to halt global transcription and enable 'last resort' DNA repair pathways.

Its subcellular location is the nucleus. The catalysed reaction is RNA(n) + a ribonucleoside 5'-triphosphate = RNA(n+1) + diphosphate. In terms of biological role, DNA-dependent RNA polymerase catalyzes the transcription of DNA into RNA using the four ribonucleoside triphosphates as substrates. Largest and catalytic component of RNA polymerase II which synthesizes mRNA precursors and many functional non-coding RNAs. Forms the polymerase active center together with the second largest subunit. Pol II is the central component of the basal RNA polymerase II transcription machinery. During a transcription cycle, Pol II, general transcription factors and the Mediator complex assemble as the preinitiation complex (PIC) at the promoter. 11-15 base pairs of DNA surrounding the transcription start site are melted and the single-stranded DNA template strand of the promoter is positioned deeply within the central active site cleft of Pol II to form the open complex. After synthesis of about 30 bases of RNA, Pol II releases its contacts with the core promoter and the rest of the transcription machinery (promoter clearance) and enters the stage of transcription elongation in which it moves on the template as the transcript elongates. Pol II appears to oscillate between inactive and active conformations at each step of nucleotide addition. Elongation is influenced by the phosphorylation status of the C-terminal domain (CTD) of Pol II largest subunit (RPB1), which serves as a platform for assembly of factors that regulate transcription initiation, elongation, termination and mRNA processing. Pol II is composed of mobile elements that move relative to each other. The core element with the central large cleft comprises RPB3, RBP10, RPB11, RPB12 and regions of RPB1 and RPB2 forming the active center. The clamp element (portions of RPB1, RPB2 and RPB3) is connected to the core through a set of flexible switches and moves to open and close the cleft. A bridging helix emanates from RPB1 and crosses the cleft near the catalytic site and is thought to promote translocation of Pol II by acting as a ratchet that moves the RNA-DNA hybrid through the active site by switching from straight to bent conformations at each step of nucleotide addition. In elongating Pol II, the lid loop (RPB1) appears to act as a wedge to drive apart the DNA and RNA strands at the upstream end of the transcription bubble and guide the RNA strand toward the RNA exit groove located near the base of the largely unstructured CTD domain of RPB1. The rudder loop (RPB1) interacts with single-stranded DNA after separation from the RNA strand, likely preventing reassociation with the exiting RNA. The cleft is surrounded by jaws: an upper jaw formed by portions of RBP1, RPB2 and RPB9, and a lower jaw, formed by RPB5 and portions of RBP1. The jaws are thought to grab the incoming DNA template, mainly by RPB5 direct contacts to DNA. The sequence is that of DNA-directed RNA polymerase II subunit RPB1 (RPO21) from Saccharomyces cerevisiae (strain ATCC 204508 / S288c) (Baker's yeast).